The sequence spans 256 residues: Small ribosomal subunit protein eS1 (256 aa).

The segment covering 1 to 18 (MAVGKNKRLSKGKKGIKK) has biased composition (basic residues). The disordered stretch occupies residues 1–20 (MAVGKNKRLSKGKKGIKKRT). A2 carries the N-acetylalanine; partial modification.

Belongs to the eukaryotic ribosomal protein eS1 family. In terms of assembly, component of the small ribosomal subunit. Mature ribosomes consist of a small (40S) and a large (60S) subunit. The 40S subunit contains about 33 different proteins and 1 molecule of RNA (18S). The 60S subunit contains about 49 different proteins and 3 molecules of RNA (25S, 5.8S and 5S).

The protein localises to the cytoplasm. The sequence is that of Small ribosomal subunit protein eS1 (rps1) from Aspergillus flavus (strain ATCC 200026 / FGSC A1120 / IAM 13836 / NRRL 3357 / JCM 12722 / SRRC 167).